A 753-amino-acid chain; its full sequence is 5-methyltetrahydropteroyltriglutamate--homocysteine methyltransferase (753 aa).

5-methyltetrahydropteroyltri-L-glutamate-binding positions include 17 to 20 (RELK) and Lys117. L-homocysteine is bound by residues 431–433 (IGS) and Glu484. L-methionine-binding positions include 431–433 (IGS) and Glu484. 5-methyltetrahydropteroyltri-L-glutamate is bound by residues 515 to 516 (RC) and Trp561. Residue Asp599 coordinates L-homocysteine. Position 599 (Asp599) interacts with L-methionine. Glu605 serves as a coordination point for 5-methyltetrahydropteroyltri-L-glutamate. Zn(2+)-binding residues include His641, Cys643, and Glu665. The active-site Proton donor is His694. A Zn(2+)-binding site is contributed by Cys726.

This sequence belongs to the vitamin-B12 independent methionine synthase family. Requires Zn(2+) as cofactor.

The enzyme catalyses 5-methyltetrahydropteroyltri-L-glutamate + L-homocysteine = tetrahydropteroyltri-L-glutamate + L-methionine. It participates in amino-acid biosynthesis; L-methionine biosynthesis via de novo pathway; L-methionine from L-homocysteine (MetE route): step 1/1. Functionally, catalyzes the transfer of a methyl group from 5-methyltetrahydrofolate to homocysteine resulting in methionine formation. This is 5-methyltetrahydropteroyltriglutamate--homocysteine methyltransferase from Citrobacter koseri (strain ATCC BAA-895 / CDC 4225-83 / SGSC4696).